Consider the following 273-residue polypeptide: Dermonecrotic toxin LdSicTox-alphaIB3aiv (273 aa).

Residue His-5 is part of the active site. Positions 25 and 27 each coordinate Mg(2+). His-41 (nucleophile) is an active-site residue. 2 cysteine pairs are disulfide-bonded: Cys-45–Cys-51 and Cys-47–Cys-190. A Mg(2+)-binding site is contributed by Asp-85.

It belongs to the arthropod phospholipase D family. Class II subfamily. Mg(2+) is required as a cofactor. As to expression, expressed by the venom gland.

The protein resides in the secreted. The catalysed reaction is an N-(acyl)-sphingosylphosphocholine = an N-(acyl)-sphingosyl-1,3-cyclic phosphate + choline. It catalyses the reaction an N-(acyl)-sphingosylphosphoethanolamine = an N-(acyl)-sphingosyl-1,3-cyclic phosphate + ethanolamine. The enzyme catalyses a 1-acyl-sn-glycero-3-phosphocholine = a 1-acyl-sn-glycero-2,3-cyclic phosphate + choline. It carries out the reaction a 1-acyl-sn-glycero-3-phosphoethanolamine = a 1-acyl-sn-glycero-2,3-cyclic phosphate + ethanolamine. Functionally, dermonecrotic toxins cleave the phosphodiester linkage between the phosphate and headgroup of certain phospholipids (sphingolipid and lysolipid substrates), forming an alcohol (often choline) and a cyclic phosphate. This toxin acts on sphingomyelin (SM). It may also act on ceramide phosphoethanolamine (CPE), lysophosphatidylcholine (LPC) and lysophosphatidylethanolamine (LPE), but not on lysophosphatidylserine (LPS), and lysophosphatidylglycerol (LPG). It acts by transphosphatidylation, releasing exclusively cyclic phosphate products as second products. Induces dermonecrosis, hemolysis, increased vascular permeability, edema, inflammatory response, and platelet aggregation. The sequence is that of Dermonecrotic toxin LdSicTox-alphaIB3aiv from Loxosceles deserta (Desert recluse spider).